The following is a 436-amino-acid chain: Deoxyuridine 5'-triphosphate nucleotidohydrolase (436 aa).

Substrate contacts are provided by residues arginine 328–serine 330 and phenylalanine 431–glycine 432.

Belongs to the dUTPase family. Mg(2+) serves as cofactor.

The enzyme catalyses dUTP + H2O = dUMP + diphosphate + H(+). Involved in nucleotide metabolism: produces dUMP, the immediate precursor of thymidine nucleotides and decreases the intracellular concentration of dUTP to avoid uracil incorporation into viral DNA. The chain is Deoxyuridine 5'-triphosphate nucleotidohydrolase from Gallid herpesvirus 2 (strain Chicken/Md5/ATCC VR-987) (GaHV-2).